The following is a 217-amino-acid chain: tRNA 5-hydroxyuridine methyltransferase (217 aa).

Residues methionine 38, serine 68, glutamate 85, 113-114 (DA), and aspartate 133 each bind S-adenosyl-L-methionine. 3 residues coordinate Mg(2+): aspartate 133, aspartate 159, and asparagine 160.

The protein belongs to the class I-like SAM-binding methyltransferase superfamily. Cation-dependent O-methyltransferase family. In terms of assembly, homodimer.

It carries out the reaction 5-hydroxyuridine(34) in tRNA + S-adenosyl-L-methionine = 5-methoxyuridine(34) in tRNA + S-adenosyl-L-homocysteine + H(+). Functionally, catalyzes the methylation of 5-hydroxyuridine (ho5U) to form 5-methoxyuridine (mo5U) at position 34 in tRNAs. The sequence is that of tRNA 5-hydroxyuridine methyltransferase from Bacillus subtilis (strain 168).